Consider the following 161-residue polypeptide: Phenolic acid decarboxylase PadC (161 aa).

Positions 11 and 13 each coordinate substrate. The active-site Proton donor is the Tyr-19. Arg-41 provides a ligand contact to substrate. The active-site Proton acceptor is Glu-64.

It belongs to the PadC family. As to quaternary structure, homodimer.

The catalysed reaction is (E)-4-coumarate + H(+) = 4-vinylphenol + CO2. It carries out the reaction (E)-cinnamate + H(+) = styrene + CO2. The enzyme catalyses (E)-ferulate + H(+) = 2-methoxy-4-vinylphenol + CO2. Functionally, involved in the decarboxylation and detoxification of phenolic derivatives. It is able to catalyze the decarboxylation of ferulic, p-coumaric and caffeic acids. This is Phenolic acid decarboxylase PadC (padC) from Bacillus subtilis (strain 168).